The primary structure comprises 766 residues: Protein zer-1 homolog (766 aa).

N-acetylalanine is present on alanine 2. 3 LRR repeats span residues 226 to 245 (SLVLYNMDLSDDHIRVIVQL), 246 to 268 (HKLRHLDISRDRLSSYYKFKLTR), and 278 to 302 (LGNLMSLDISGHMILENCSISKMEE). ARM repeat units lie at residues 427-467 (RSEQ…NFSI), 511-556 (DNDH…NITD), 558-600 (TPDN…NVAE), 602-643 (KELR…HIMF), and 714-756 (PDKY…HCSN).

Belongs to the zyg-11 family. In terms of assembly, interacts with the ELOC-ELOB/Elongin BC complex. Part of an E3 ubiquitin ligase complex including ZER1, CUL2 and Elongin BC. Expressed in testis, spermatocytes and spermatids (at protein level). Expressed in spermatocytes, spermatids, prostate, skeletal muscle, ovary, small intestine, heart, brain and pancreas.

In terms of biological role, serves as substrate adapter subunit in the E3 ubiquitin ligase complex ZYG11B-CUL2-Elongin BC. Acts to target substrates bearing N-terminal degrons for proteasomal degradation with the first four residues of substrates being the key recognition elements. Involved in the clearance of proteolytic fragments generated by caspase cleavage during apoptosis since N-terminal glycine degrons are strongly enriched at caspase cleavage sites. Also important in the quality control of protein N-myristoylation in which N-terminal glycine degrons are conditionally exposed after a failure of N-myristoylation. The sequence is that of Protein zer-1 homolog from Homo sapiens (Human).